A 206-amino-acid polypeptide reads, in one-letter code: Peptidyl-tRNA hydrolase (206 aa).

Tyr19 contacts tRNA. His24 serves as the catalytic Proton acceptor. 3 residues coordinate tRNA: Phe70, Asn72, and Asn118.

The protein belongs to the PTH family. Monomer.

The protein localises to the cytoplasm. It carries out the reaction an N-acyl-L-alpha-aminoacyl-tRNA + H2O = an N-acyl-L-amino acid + a tRNA + H(+). Its function is as follows. Hydrolyzes ribosome-free peptidyl-tRNAs (with 1 or more amino acids incorporated), which drop off the ribosome during protein synthesis, or as a result of ribosome stalling. In terms of biological role, catalyzes the release of premature peptidyl moieties from peptidyl-tRNA molecules trapped in stalled 50S ribosomal subunits, and thus maintains levels of free tRNAs and 50S ribosomes. The chain is Peptidyl-tRNA hydrolase from Synechococcus sp. (strain CC9902).